The chain runs to 287 residues: uncharacterized protein (287 aa).

This is an uncharacterized protein from Acanthamoeba polyphaga mimivirus (APMV).